Consider the following 196-residue polypeptide: Pyridoxal 5'-phosphate synthase subunit PdxT (196 aa).

G47–S49 contacts L-glutamine. The active-site Nucleophile is C79. L-glutamine is bound by residues R106 and I134 to R135. Active-site charge relay system residues include H170 and E172.

The protein belongs to the glutaminase PdxT/SNO family. In terms of assembly, in the presence of PdxS, forms a dodecamer of heterodimers. Only shows activity in the heterodimer.

It catalyses the reaction aldehydo-D-ribose 5-phosphate + D-glyceraldehyde 3-phosphate + L-glutamine = pyridoxal 5'-phosphate + L-glutamate + phosphate + 3 H2O + H(+). It carries out the reaction L-glutamine + H2O = L-glutamate + NH4(+). Its pathway is cofactor biosynthesis; pyridoxal 5'-phosphate biosynthesis. Its function is as follows. Catalyzes the hydrolysis of glutamine to glutamate and ammonia as part of the biosynthesis of pyridoxal 5'-phosphate. The resulting ammonia molecule is channeled to the active site of PdxS. The protein is Pyridoxal 5'-phosphate synthase subunit PdxT of Bacillus cereus (strain ZK / E33L).